Consider the following 368-residue polypeptide: MVTGWHRPTWIEIDRAAIRENIKNEQNKLPDKVALWAVVKANAYGHGIIETAKIAKEAGAKGFCVAILDEALALREAGFRNEFILVLGATRKEDANLAAKNNISVTVFREDWLDDLTLEAPLRIHLKVDSGMGRLGIRSREEAQRIETTIAIDHQMILEGIYTHFATADQLETSYFEQQLAKFQAILSSLTTRPTFVHTANSAASLLQPQIDFDAIRFGISMYGLTPSTEIKNSLPFELKPALALYTEMVHVKELAPGDSVSYGATYTATEKEWVATLPIGYADGLIRHYSGFHVLVEGERAPIIGRICMDQTIIKLPREFQTGTKVTIIGSDHGNKVTADDAAEYLGTINYEVTCLLTERIPRKYIN.

Residue lysine 40 is the Proton acceptor; specific for D-alanine of the active site. An N6-(pyridoxal phosphate)lysine modification is found at lysine 40. A substrate-binding site is contributed by arginine 134. The Proton acceptor; specific for L-alanine role is filled by tyrosine 263. Position 310 (methionine 310) interacts with substrate.

It belongs to the alanine racemase family. The cofactor is pyridoxal 5'-phosphate.

The catalysed reaction is L-alanine = D-alanine. The protein operates within amino-acid biosynthesis; D-alanine biosynthesis; D-alanine from L-alanine: step 1/1. Its function is as follows. Catalyzes the interconversion of L-alanine and D-alanine. May also act on other amino acids. This chain is Alanine racemase (alr), found in Listeria innocua serovar 6a (strain ATCC BAA-680 / CLIP 11262).